The following is a 205-amino-acid chain: uncharacterized protein (205 aa).

Helical transmembrane passes span 4 to 24 (LAFLILLIVFSNLSLVNAIDD), 105 to 125 (KWFIAISILILGIILATLWIL), 130 to 150 (FLLFLAIFGLIVPFLQFKIPN), 151 to 171 (WLFNILALPLFVYIKFIVPEC), and 182 to 202 (ITIPISMYGWILIGLAVKFII).

It is found in the cell membrane. This is an uncharacterized protein from Methanocaldococcus jannaschii (strain ATCC 43067 / DSM 2661 / JAL-1 / JCM 10045 / NBRC 100440) (Methanococcus jannaschii).